The sequence spans 745 residues: Serine/threonine-protein kinase BUR1 (745 aa).

Residues 1–21 (MSVIAGHHVPRSNDQRQYDTP) are disordered. Residues 44 to 349 (YEVIEKLGQG…ALDALNHKFF (306 aa)) form the Protein kinase domain. Residues 50–58 (LGQGTFGVV) and Lys73 each bind ATP. Catalysis depends on Asp179, which acts as the Proton acceptor. 3 stretches are compositionally biased toward basic and acidic residues: residues 380–406 (DKEQ…RYNA), 428–475 (DYID…DIQN), and 493–508 (KLRE…KKYD). Residues 380–701 (DKEQAVSELK…EVSDLEEDSD (322 aa)) are disordered. Over residues 516-534 (SRGSKSPSPSKLSSISQSK) the composition is skewed to low complexity. Basic and acidic residues predominate over residues 547–557 (ASRESSLERKQ). 2 stretches are compositionally biased toward polar residues: residues 558–567 (VSNGIRTTTD) and 586–598 (LTSN…PTRN). A compositionally biased stretch (basic and acidic residues) spans 599 to 631 (KSVERPKDLEKPTNGVTEDRNKKPVLEEKKEVV). Positions 632-660 (KPNLAIPKIKKSSSLVSLSSRSSTTPVIS) are enriched in low complexity. Over residues 661 to 674 (NPSKVTKRAASSVT) the composition is skewed to polar residues. The span at 692–701 (EVSDLEEDSD) shows a compositional bias: acidic residues.

It belongs to the protein kinase superfamily. CMGC Ser/Thr protein kinase family. CDC2/CDKX subfamily.

The protein resides in the nucleus. It catalyses the reaction L-seryl-[protein] + ATP = O-phospho-L-seryl-[protein] + ADP + H(+). The enzyme catalyses L-threonyl-[protein] + ATP = O-phospho-L-threonyl-[protein] + ADP + H(+). It carries out the reaction [DNA-directed RNA polymerase] + ATP = phospho-[DNA-directed RNA polymerase] + ADP + H(+). In terms of biological role, serine/threonine-protein kinase involved in transcription regulation. Phosphorylates the UBC2/RAD6 ubiquitin-conjugating enzyme (E2), leading to monoubiquitination of histone H2B and the silencing of telomeric-associated genes. Also required for histone H3 methylation. Necessary for the recovery from pheromone-induced growth arrest in the cell cycle G1 phase. Required for pseudohyphal growth and virulence in mice. In Candida albicans (strain SC5314 / ATCC MYA-2876) (Yeast), this protein is Serine/threonine-protein kinase BUR1 (CRK1).